The primary structure comprises 186 residues: Orotate phosphoribosyltransferase (186 aa).

Residues arginine 93, lysine 94, lysine 97, histidine 99, and 119–127 each bind 5-phospho-alpha-D-ribose 1-diphosphate; that span reads EDVTTTGGS. The orotate site is built by threonine 123 and arginine 151.

The protein belongs to the purine/pyrimidine phosphoribosyltransferase family. PyrE subfamily. Homodimer. The cofactor is Mg(2+).

The enzyme catalyses orotidine 5'-phosphate + diphosphate = orotate + 5-phospho-alpha-D-ribose 1-diphosphate. The protein operates within pyrimidine metabolism; UMP biosynthesis via de novo pathway; UMP from orotate: step 1/2. In terms of biological role, catalyzes the transfer of a ribosyl phosphate group from 5-phosphoribose 1-diphosphate to orotate, leading to the formation of orotidine monophosphate (OMP). This chain is Orotate phosphoribosyltransferase, found in Pyrococcus horikoshii (strain ATCC 700860 / DSM 12428 / JCM 9974 / NBRC 100139 / OT-3).